The following is a 430-amino-acid chain: Histidine--tRNA ligase (430 aa).

This sequence belongs to the class-II aminoacyl-tRNA synthetase family. In terms of assembly, homodimer.

The protein resides in the cytoplasm. The enzyme catalyses tRNA(His) + L-histidine + ATP = L-histidyl-tRNA(His) + AMP + diphosphate + H(+). The protein is Histidine--tRNA ligase of Lactococcus lactis subsp. cremoris (strain SK11).